The chain runs to 274 residues: Protein A11 homolog (274 aa).

The stretch at 106–136 forms a coiled coil; that stretch reads DDNKRVHLLEQEIAELRKKKTKSKNLLDFTN.

This sequence belongs to the poxviridae A11 family. Homomultimer. Interacts with A32. Phosphorylated by a F10-independent mechanism.

The protein localises to the host cytoplasm. In terms of biological role, required for viral crescent formation early during virus morphogenesis. This Fowlpox virus (strain NVSL) (FPV) protein is Protein A11 homolog.